Reading from the N-terminus, the 607-residue chain is Elongation factor 4 (607 aa).

The 183-residue stretch at 11 to 193 (KNIRNFSIIA…KIVEVVPPPE (183 aa)) folds into the tr-type G domain. GTP is bound by residues 23–28 (DHGKST) and 140–143 (NKID).

The protein belongs to the TRAFAC class translation factor GTPase superfamily. Classic translation factor GTPase family. LepA subfamily.

The protein resides in the cell membrane. The enzyme catalyses GTP + H2O = GDP + phosphate + H(+). Required for accurate and efficient protein synthesis under certain stress conditions. May act as a fidelity factor of the translation reaction, by catalyzing a one-codon backward translocation of tRNAs on improperly translocated ribosomes. Back-translocation proceeds from a post-translocation (POST) complex to a pre-translocation (PRE) complex, thus giving elongation factor G a second chance to translocate the tRNAs correctly. Binds to ribosomes in a GTP-dependent manner. This Staphylococcus saprophyticus subsp. saprophyticus (strain ATCC 15305 / DSM 20229 / NCIMB 8711 / NCTC 7292 / S-41) protein is Elongation factor 4.